Consider the following 245-residue polypeptide: UDP-N-acetyl-D-mannosaminuronic acid transferase (245 aa).

Belongs to the glycosyltransferase 26 family.

The catalysed reaction is UDP-N-acetyl-alpha-D-mannosaminouronate + N-acetyl-alpha-D-glucosaminyl-di-trans,octa-cis-undecaprenyl diphosphate = beta-D-ManNAcA-(1-&gt;4)-alpha-D-GlcNAc-di-trans,octa-cis-undecaprenyl diphosphate + UDP + H(+). It functions in the pathway bacterial outer membrane biogenesis; enterobacterial common antigen biosynthesis. Its function is as follows. Catalyzes the synthesis of Und-PP-GlcNAc-ManNAcA (Lipid II), the second lipid-linked intermediate involved in enterobacterial common antigen (ECA) synthesis. The protein is UDP-N-acetyl-D-mannosaminuronic acid transferase of Proteus mirabilis (strain HI4320).